Here is a 295-residue protein sequence, read N- to C-terminus: 33 kDa chaperonin (295 aa).

Disulfide bonds link C230/C232 and C264/C267.

This sequence belongs to the HSP33 family. Under oxidizing conditions two disulfide bonds are formed involving the reactive cysteines. Under reducing conditions zinc is bound to the reactive cysteines and the protein is inactive.

The protein resides in the cytoplasm. Redox regulated molecular chaperone. Protects both thermally unfolding and oxidatively damaged proteins from irreversible aggregation. Plays an important role in the bacterial defense system toward oxidative stress. This is 33 kDa chaperonin from Ectopseudomonas mendocina (strain ymp) (Pseudomonas mendocina).